The following is a 556-amino-acid chain: Formate--tetrahydrofolate ligase (556 aa).

65-72 (TPAGEGKS) is an ATP binding site.

Belongs to the formate--tetrahydrofolate ligase family.

The enzyme catalyses (6S)-5,6,7,8-tetrahydrofolate + formate + ATP = (6R)-10-formyltetrahydrofolate + ADP + phosphate. It participates in one-carbon metabolism; tetrahydrofolate interconversion. The protein is Formate--tetrahydrofolate ligase of Streptococcus pneumoniae serotype 4 (strain ATCC BAA-334 / TIGR4).